The chain runs to 384 residues: Alanine racemase (384 aa).

Lys46 (proton acceptor; specific for D-alanine) is an active-site residue. Lys46 bears the N6-(pyridoxal phosphate)lysine mark. Arg144 contacts substrate. The active-site Proton acceptor; specific for L-alanine is Tyr278. Met326 provides a ligand contact to substrate.

Belongs to the alanine racemase family. Pyridoxal 5'-phosphate serves as cofactor.

The catalysed reaction is L-alanine = D-alanine. Its pathway is amino-acid biosynthesis; D-alanine biosynthesis; D-alanine from L-alanine: step 1/1. In terms of biological role, catalyzes the interconversion of L-alanine and D-alanine. May also act on other amino acids. This chain is Alanine racemase (alr), found in Frankia casuarinae (strain DSM 45818 / CECT 9043 / HFP020203 / CcI3).